A 156-amino-acid chain; its full sequence is SsrA-binding protein (156 aa).

Belongs to the SmpB family.

It localises to the cytoplasm. Required for rescue of stalled ribosomes mediated by trans-translation. Binds to transfer-messenger RNA (tmRNA), required for stable association of tmRNA with ribosomes. tmRNA and SmpB together mimic tRNA shape, replacing the anticodon stem-loop with SmpB. tmRNA is encoded by the ssrA gene; the 2 termini fold to resemble tRNA(Ala) and it encodes a 'tag peptide', a short internal open reading frame. During trans-translation Ala-aminoacylated tmRNA acts like a tRNA, entering the A-site of stalled ribosomes, displacing the stalled mRNA. The ribosome then switches to translate the ORF on the tmRNA; the nascent peptide is terminated with the 'tag peptide' encoded by the tmRNA and targeted for degradation. The ribosome is freed to recommence translation, which seems to be the essential function of trans-translation. The polypeptide is SsrA-binding protein (Maricaulis maris (strain MCS10) (Caulobacter maris)).